Consider the following 491-residue polypeptide: Glutamyl-tRNA(Gln) amidotransferase subunit A (491 aa).

Catalysis depends on charge relay system residues Lys76 and Ser154. The Acyl-ester intermediate role is filled by Ser178.

It belongs to the amidase family. GatA subfamily. In terms of assembly, heterotrimer of A, B and C subunits.

The catalysed reaction is L-glutamyl-tRNA(Gln) + L-glutamine + ATP + H2O = L-glutaminyl-tRNA(Gln) + L-glutamate + ADP + phosphate + H(+). Allows the formation of correctly charged Gln-tRNA(Gln) through the transamidation of misacylated Glu-tRNA(Gln) in organisms which lack glutaminyl-tRNA synthetase. The reaction takes place in the presence of glutamine and ATP through an activated gamma-phospho-Glu-tRNA(Gln). The sequence is that of Glutamyl-tRNA(Gln) amidotransferase subunit A from Cereibacter sphaeroides (strain ATCC 17029 / ATH 2.4.9) (Rhodobacter sphaeroides).